Reading from the N-terminus, the 99-residue chain is VEVLLGASDGGLAFVPNSFEVSAGDTIVFKNNAGFPHNVVFDEDEIPSGVDAAKISMPEEDLLNAPGETYSVKLDAKGTYKFYCSPHQGAGMVGQVTVN.

In terms of domain architecture, Plastocyanin-like spans 1–99; it reads VEVLLGASDG…AGMVGQVTVN (99 aa). 4 residues coordinate Cu cation: His-37, Cys-84, His-87, and Met-92.

Belongs to the plastocyanin family. Requires Cu(2+) as cofactor.

The protein resides in the plastid. Its subcellular location is the chloroplast thylakoid membrane. Its function is as follows. Participates in electron transfer between P700 and the cytochrome b6-f complex in photosystem I. The chain is Plastocyanin (PETE) from Vicia faba (Broad bean).